The primary structure comprises 119 residues: Ribonuclease P protein component (119 aa).

It belongs to the RnpA family. In terms of assembly, consists of a catalytic RNA component (M1 or rnpB) and a protein subunit.

The enzyme catalyses Endonucleolytic cleavage of RNA, removing 5'-extranucleotides from tRNA precursor.. Its function is as follows. RNaseP catalyzes the removal of the 5'-leader sequence from pre-tRNA to produce the mature 5'-terminus. It can also cleave other RNA substrates such as 4.5S RNA. The protein component plays an auxiliary but essential role in vivo by binding to the 5'-leader sequence and broadening the substrate specificity of the ribozyme. The chain is Ribonuclease P protein component from Cronobacter sakazakii (strain ATCC BAA-894) (Enterobacter sakazakii).